We begin with the raw amino-acid sequence, 419 residues long: Ribosome biogenesis protein WDR12 homolog (419 aa).

Residues valine 10–glutamate 91 are ubiquitin-like (UBL) domain. WD repeat units follow at residues leucine 103–proline 141, glycine 142–glutamate 184, glycine 191–glycine 230, glycine 249–glutamate 287, serine 289–valine 328, glycine 334–tyrosine 374, and glycine 378–methionine 416.

This sequence belongs to the WD repeat WDR12/YTM1 family.

The protein localises to the nucleus. The protein resides in the nucleolus. Its subcellular location is the nucleoplasm. Functionally, required for maturation of ribosomal RNAs and formation of the large ribosomal subunit. This Drosophila persimilis (Fruit fly) protein is Ribosome biogenesis protein WDR12 homolog.